We begin with the raw amino-acid sequence, 215 residues long: Myelin protein zero-like protein 2 (215 aa).

The N-terminal stretch at 1–26 (MYGKSPTRAVLFLLGLQLTALWPTAA) is a signal peptide. The 115-residue stretch at 27–141 (VEIYTPRVLE…DGLIGEIQLS (115 aa)) folds into the Ig-like V-type domain. The Extracellular segment spans residues 27–154 (VEIYTPRVLE…TVRFSEIHFL (128 aa)). N-linked (GlcNAc...) asparagine glycans are attached at residues Asn-39 and Asn-118. Residues Cys-47 and Cys-123 are joined by a disulfide bond. A helical membrane pass occupies residues 155–175 (ALAIGSACALMVIIVIVVVLF). Residues 176–215 (QHFRKKRRAERAHRVVEIKSKEEEKLNQEKKASVSLEYTD) are Cytoplasmic-facing.

This sequence belongs to the myelin P0 protein family.

Its subcellular location is the membrane. Mediates homophilic cell-cell adhesion. The protein is Myelin protein zero-like protein 2 (MPZL2) of Bos taurus (Bovine).